Consider the following 558-residue polypeptide: Glucose-6-phosphate isomerase (558 aa).

Ala2 is modified (N-acetylalanine). Residue Lys12 is modified to N6-acetyllysine. 2 positions are modified to phosphoserine: Ser86 and Ser107. Lys142 is modified (N6-acetyllysine). 159-160 is a binding site for D-glucose 6-phosphate; that stretch reads GS. A Phosphoserine; by CK2 modification is found at Ser185. 210-215 is a D-glucose 6-phosphate binding site; the sequence is SKTFTT. A Phosphothreonine modification is found at Thr250. 3 residues coordinate D-glucose 6-phosphate: Gln354, Glu358, and His389. The active-site Proton donor is the Glu358. His389 is an active-site residue. Lys454 carries the post-translational modification N6-acetyllysine; alternate. Lys454 is modified (N6-malonyllysine; alternate). Lys454 bears the N6-succinyllysine; alternate mark. Phosphoserine is present on Ser455. Lys519 lines the D-glucose 6-phosphate pocket. Lys519 is a catalytic residue.

The protein belongs to the GPI family. Homodimer; in the catalytically active form. Monomer in the secreted form. Post-translationally, phosphorylation at Ser-185 by CK2 has been shown to decrease enzymatic activity and may contribute to secretion by a non-classical secretory pathway. ISGylated.

It localises to the cytoplasm. The protein localises to the secreted. The catalysed reaction is alpha-D-glucose 6-phosphate = beta-D-fructose 6-phosphate. The protein operates within carbohydrate degradation; glycolysis; D-glyceraldehyde 3-phosphate and glycerone phosphate from D-glucose: step 2/4. Its function is as follows. In the cytoplasm, catalyzes the conversion of glucose-6-phosphate to fructose-6-phosphate, the second step in glycolysis, and the reverse reaction during gluconeogenesis. Besides it's role as a glycolytic enzyme, also acts as a secreted cytokine: acts as an angiogenic factor (AMF) that stimulates endothelial cell motility. Acts as a neurotrophic factor, neuroleukin, for spinal and sensory neurons. It is secreted by lectin-stimulated T-cells and induces immunoglobulin secretion. The chain is Glucose-6-phosphate isomerase from Rattus norvegicus (Rat).